The chain runs to 407 residues: TOM1-like protein 1 (407 aa).

An N-acetylglycine modification is found at G2. Residues 55–183 (ATTENLEEPD…SLKARGIRFP (129 aa)) enclose the VHS domain. The GAT domain occupies 228-315 (FTAEQTKEAF…TLSKYEEMNK (88 aa)). The segment at 315–407 (KPSAPLTSHE…SSKNDDLIRF (93 aa)) is disordered. S337 is modified (phosphoserine). The span at 337-347 (SPIHGREESLV) shows a compositional bias: basic and acidic residues. Residues 353–364 (VRGGFHGGGGSG) are compositionally biased toward gly residues. The span at 388–407 (PDHDPKKEQSSSKNDDLIRF) shows a compositional bias: basic and acidic residues.

Belongs to the TOM1 family. Ubiquitously expressed.

Its subcellular location is the membrane. Functionally, might contribute to the loading of the ESCRT machinery. The sequence is that of TOM1-like protein 1 from Arabidopsis thaliana (Mouse-ear cress).